The chain runs to 240 residues: UDP-2,3-diacylglucosamine hydrolase (240 aa).

Residues aspartate 8, histidine 10, aspartate 41, asparagine 79, and histidine 114 each coordinate Mn(2+). A substrate-binding site is contributed by 79 to 80 (NR). The substrate site is built by aspartate 122, serine 160, asparagine 164, lysine 167, and histidine 195. Mn(2+)-binding residues include histidine 195 and histidine 197.

It belongs to the LpxH family. Mn(2+) is required as a cofactor.

The protein resides in the cell inner membrane. It carries out the reaction UDP-2-N,3-O-bis[(3R)-3-hydroxytetradecanoyl]-alpha-D-glucosamine + H2O = 2-N,3-O-bis[(3R)-3-hydroxytetradecanoyl]-alpha-D-glucosaminyl 1-phosphate + UMP + 2 H(+). It functions in the pathway glycolipid biosynthesis; lipid IV(A) biosynthesis; lipid IV(A) from (3R)-3-hydroxytetradecanoyl-[acyl-carrier-protein] and UDP-N-acetyl-alpha-D-glucosamine: step 4/6. Hydrolyzes the pyrophosphate bond of UDP-2,3-diacylglucosamine to yield 2,3-diacylglucosamine 1-phosphate (lipid X) and UMP by catalyzing the attack of water at the alpha-P atom. Involved in the biosynthesis of lipid A, a phosphorylated glycolipid that anchors the lipopolysaccharide to the outer membrane of the cell. This is UDP-2,3-diacylglucosamine hydrolase from Escherichia coli O6:H1 (strain CFT073 / ATCC 700928 / UPEC).